The chain runs to 444 residues: Ribosomal protein uS12 methylthiotransferase RimO (444 aa).

One can recognise an MTTase N-terminal domain in the interval 4–118 (YKIGLISLGC…IQNYIDDFFN (115 aa)). [4Fe-4S] cluster is bound by residues Cys-13, Cys-48, Cys-81, Cys-155, Cys-159, and Cys-162. Residues 141–371 (TTAKHMAYIR…MSIQQNVSSK (231 aa)) form the Radical SAM core domain. One can recognise a TRAM domain in the interval 374-440 (KNKLEKVYKV…EYDLIGVVCD (67 aa)).

The protein belongs to the methylthiotransferase family. RimO subfamily. [4Fe-4S] cluster serves as cofactor.

The protein localises to the cytoplasm. The catalysed reaction is L-aspartate(89)-[ribosomal protein uS12]-hydrogen + (sulfur carrier)-SH + AH2 + 2 S-adenosyl-L-methionine = 3-methylsulfanyl-L-aspartate(89)-[ribosomal protein uS12]-hydrogen + (sulfur carrier)-H + 5'-deoxyadenosine + L-methionine + A + S-adenosyl-L-homocysteine + 2 H(+). Functionally, catalyzes the methylthiolation of an aspartic acid residue of ribosomal protein uS12. The chain is Ribosomal protein uS12 methylthiotransferase RimO from Clostridium novyi (strain NT).